A 573-amino-acid chain; its full sequence is Eukaryotic translation initiation factor 3 subunit D (573 aa).

The segment at 111 to 162 is disordered; the sequence is VFTRGGRGQRGARGTERGGRAQLSRGRGGQYGGGYDRGGRSAAGGRGGRRFG. Positions 136-156 are enriched in gly residues; the sequence is GRGGQYGGGYDRGGRSAAGGR. The RNA gate stretch occupies residues 301–315; it reads ALDMVTVNENAVDAP. The segment at 552–573 is disordered; sequence PAGGLDEEEDNGDLGQEEDDEE. Positions 556–573 are enriched in acidic residues; the sequence is LDEEEDNGDLGQEEDDEE.

Belongs to the eIF-3 subunit D family. As to quaternary structure, component of the eukaryotic translation initiation factor 3 (eIF-3) complex.

The protein localises to the cytoplasm. Its function is as follows. mRNA cap-binding component of the eukaryotic translation initiation factor 3 (eIF-3) complex, which is involved in protein synthesis of a specialized repertoire of mRNAs and, together with other initiation factors, stimulates binding of mRNA and methionyl-tRNAi to the 40S ribosome. The eIF-3 complex specifically targets and initiates translation of a subset of mRNAs involved in cell proliferation. In the eIF-3 complex, eif3d specifically recognizes and binds the 7-methylguanosine cap of a subset of mRNAs. The polypeptide is Eukaryotic translation initiation factor 3 subunit D (Pyricularia oryzae (strain 70-15 / ATCC MYA-4617 / FGSC 8958) (Rice blast fungus)).